The chain runs to 358 residues: Alanine racemase (358 aa).

Lysine 35 acts as the Proton acceptor; specific for D-alanine in catalysis. Lysine 35 is subject to N6-(pyridoxal phosphate)lysine. Arginine 130 contacts substrate. The Proton acceptor; specific for L-alanine role is filled by tyrosine 255. Methionine 303 lines the substrate pocket.

It belongs to the alanine racemase family. The cofactor is pyridoxal 5'-phosphate.

The catalysed reaction is L-alanine = D-alanine. The protein operates within amino-acid biosynthesis; D-alanine biosynthesis; D-alanine from L-alanine: step 1/1. Catalyzes the interconversion of L-alanine and D-alanine. May also act on other amino acids. The polypeptide is Alanine racemase (alr) (Shewanella piezotolerans (strain WP3 / JCM 13877)).